The sequence spans 320 residues: Olfactory receptor 2T12 (320 aa).

At 1–23 (MEMRNTTPDFILLGLFNHTRAHQ) the chain is on the extracellular side. Residue Asn-17 is glycosylated (N-linked (GlcNAc...) asparagine). The chain crosses the membrane as a helical span at residues 24-47 (VLFMMLLATVLTSLFSNALMILLI). The Cytoplasmic portion of the chain corresponds to 48–55 (HWDHRLHR). A helical transmembrane segment spans residues 56–77 (PMYFLLSQLSLMDMMLVSTTVP). At 78–98 (KMAADYLTGNKAISRAGCGVQ) the chain is on the extracellular side. Cys-95 and Cys-187 are joined by a disulfide. Residues 99 to 118 (IFFLPTLGGGECFLLAAMAY) form a helical membrane-spanning segment. Residues 119 to 137 (DRYAAVCHPLRYPTLMSWQ) are Cytoplasmic-facing. The helical transmembrane segment at 138–156 (LCLRMTMSSWLLGAADGLL) threads the bilayer. Residues 157 to 193 (QAVATLSFPYCGAHEIDHFFCEAPVLVRLACADTSVF) are Extracellular-facing. A helical membrane pass occupies residues 194–217 (ENAMYICCVLMLLVPFSLILSSYG). Residues 218–234 (LILAAVLLMRSTEARKK) are Cytoplasmic-facing. Residues 235–257 (AFATCSSHVAVVGLFYGAGIFTY) form a helical membrane-spanning segment. Residues 258 to 270 (MRPKSHRSTNHDK) lie on the Extracellular side of the membrane. Residues 271-290 (VVSAFYTMFTPLLNPLIYSV) form a helical membrane-spanning segment. Over 291–320 (RNSEVKEALKRWLGTCVNLKHQQNEAHRSR) the chain is Cytoplasmic.

The protein belongs to the G-protein coupled receptor 1 family.

Its subcellular location is the cell membrane. In terms of biological role, odorant receptor. The polypeptide is Olfactory receptor 2T12 (OR2T12) (Homo sapiens (Human)).